A 173-amino-acid chain; its full sequence is Peptidyl-prolyl cis-trans isomerase 3 (173 aa).

The region spanning 7 to 170 (FFDITIGGKA…KDCMIADCGQ (164 aa)) is the PPIase cyclophilin-type domain.

The protein belongs to the cyclophilin-type PPIase family. In terms of tissue distribution, exclusively expressed in the single anterior excretory cell.

It carries out the reaction [protein]-peptidylproline (omega=180) = [protein]-peptidylproline (omega=0). Catalyzes the cis-trans isomerization of proline imidic peptide bonds in oligopeptides. Plays a role in protein folding, transport and assembly. The chain is Peptidyl-prolyl cis-trans isomerase 3 (cyn-3) from Caenorhabditis elegans.